Here is a 271-residue protein sequence, read N- to C-terminus: Shikimate dehydrogenase (NADP(+)) (271 aa).

Residues 16–18 (SRS) and Thr-63 contribute to the shikimate site. Residue Lys-67 is the Proton acceptor of the active site. Positions 88 and 104 each coordinate shikimate. Residues 128-132 (GAGGA), 152-157 (NRTASK), and Met-215 each bind NADP(+). Tyr-217 lines the shikimate pocket. Residue Gly-238 coordinates NADP(+).

The protein belongs to the shikimate dehydrogenase family. In terms of assembly, homodimer.

The enzyme catalyses shikimate + NADP(+) = 3-dehydroshikimate + NADPH + H(+). Its pathway is metabolic intermediate biosynthesis; chorismate biosynthesis; chorismate from D-erythrose 4-phosphate and phosphoenolpyruvate: step 4/7. Its function is as follows. Involved in the biosynthesis of the chorismate, which leads to the biosynthesis of aromatic amino acids. Catalyzes the reversible NADPH linked reduction of 3-dehydroshikimate (DHSA) to yield shikimate (SA). In Chromohalobacter salexigens (strain ATCC BAA-138 / DSM 3043 / CIP 106854 / NCIMB 13768 / 1H11), this protein is Shikimate dehydrogenase (NADP(+)).